The sequence spans 417 residues: Serpin H1 (417 aa).

An N-terminal signal peptide occupies residues 1 to 17 (MRSLLLGTLCLLAVALA). Lysine 93 is subject to N6-succinyllysine. N-linked (GlcNAc...) asparagine glycosylation is found at asparagine 119 and asparagine 124. Position 140 is a phosphoserine (serine 140). Position 206 is an N6-acetyllysine (lysine 206). Lysine 295 is modified (N6-succinyllysine). An N6-acetyllysine modification is found at lysine 318. The N-linked (GlcNAc...) asparagine glycan is linked to asparagine 394. The Prevents secretion from ER motif lies at 414 to 417 (RDEL).

This sequence belongs to the serpin family.

It localises to the endoplasmic reticulum lumen. Its function is as follows. Binds specifically to collagen. Could be involved as a chaperone in the biosynthetic pathway of collagen. In Rattus norvegicus (Rat), this protein is Serpin H1 (Serpinh1).